A 486-amino-acid polypeptide reads, in one-letter code: Protein nucleotidyltransferase YdiU (486 aa).

ATP is bound by residues glycine 90, glycine 92, arginine 93, lysine 113, aspartate 125, glycine 126, arginine 176, and arginine 183. Catalysis depends on aspartate 252, which acts as the Proton acceptor. 2 residues coordinate Mg(2+): asparagine 253 and aspartate 262. Aspartate 262 lines the ATP pocket.

This sequence belongs to the SELO family. Mg(2+) is required as a cofactor. The cofactor is Mn(2+).

The enzyme catalyses L-seryl-[protein] + ATP = 3-O-(5'-adenylyl)-L-seryl-[protein] + diphosphate. The catalysed reaction is L-threonyl-[protein] + ATP = 3-O-(5'-adenylyl)-L-threonyl-[protein] + diphosphate. It carries out the reaction L-tyrosyl-[protein] + ATP = O-(5'-adenylyl)-L-tyrosyl-[protein] + diphosphate. It catalyses the reaction L-histidyl-[protein] + UTP = N(tele)-(5'-uridylyl)-L-histidyl-[protein] + diphosphate. The enzyme catalyses L-seryl-[protein] + UTP = O-(5'-uridylyl)-L-seryl-[protein] + diphosphate. The catalysed reaction is L-tyrosyl-[protein] + UTP = O-(5'-uridylyl)-L-tyrosyl-[protein] + diphosphate. Its function is as follows. Nucleotidyltransferase involved in the post-translational modification of proteins. It can catalyze the addition of adenosine monophosphate (AMP) or uridine monophosphate (UMP) to a protein, resulting in modifications known as AMPylation and UMPylation. This Pseudomonas putida (strain ATCC 700007 / DSM 6899 / JCM 31910 / BCRC 17059 / LMG 24140 / F1) protein is Protein nucleotidyltransferase YdiU.